The primary structure comprises 263 residues: R-spondin-1 (263 aa).

The first 20 residues, 1–20 (MRLGLCVVALVLSWTHLTIS), serve as a signal peptide directing secretion. 2 FU repeats span residues 34 to 85 (AEGS…GYFD) and 91 to 135 (MNKC…GSSA). Cystine bridges form between Cys-40–Cys-47, Cys-44–Cys-53, Cys-56–Cys-75, Cys-79–Cys-94, Cys-97–Cys-105, Cys-102–Cys-111, Cys-114–Cys-125, Cys-129–Cys-142, Cys-148–Cys-190, Cys-159–Cys-166, and Cys-199–Cys-206. N-linked (GlcNAc...) asparagine glycosylation is present at Asn-137. The region spanning 147 to 207 (QCEMSEWSPW…RCTVRRVPCP (61 aa)) is the TSP type-1 domain. C-linked (Man) tryptophan glycosylation is found at Trp-153 and Trp-156. Residues 206-263 (CPEGQKRRKGGQGRRENANRNLARKESKEAGAGSRRRKGQQQQQQQGTVGPLTSAGPA) are disordered. The segment covering 218–234 (GRRENANRNLARKESKE) has biased composition (basic and acidic residues).

The protein belongs to the R-spondin family. Interacts with the extracellular domain of FZD8 and LRP6. It however does not form a ternary complex with FZD8 and LRP6. Interacts with WNT1. Binds heparin. Interacts with ZNRF3; promoting indirect interaction between ZNRF3 and LGR4 and membrane clearance of ZNRF3. Interacts with LGR4, LGR5 and LGR6. Identified in a complex composed of RNF43, LGR5 and RSPO1. Interacts (via FU repeats) with KREM1. Post-translationally, C-, and N-glycosylated. N-glycosylation at Asn-137, negatively influences its secretion and enhancing effect on Wnt/beta-catenin signaling. C-mannosylation at Trp-156 by DPY19L3 is required for its secretion and regulates the enhancing activity of Wnt signaling. As to expression, abundantly expressed in adrenal glands, ovary, testis, thyroid and trachea but not in bone marrow, spinal cord, stomach, leukocytes colon, small intestine, prostate, thymus and spleen.

The protein resides in the secreted. The protein localises to the nucleus. Functionally, activator of the canonical Wnt signaling pathway by acting as a ligand for LGR4-6 receptors. Upon binding to LGR4-6 (LGR4, LGR5 or LGR6), LGR4-6 associate with phosphorylated LRP6 and frizzled receptors that are activated by extracellular Wnt receptors, triggering the canonical Wnt signaling pathway to increase expression of target genes. Also regulates the canonical Wnt/beta-catenin-dependent pathway and non-canonical Wnt signaling by acting as an inhibitor of ZNRF3, an important regulator of the Wnt signaling pathway. Acts as a ligand for frizzled FZD8 and LRP6. May negatively regulate the TGF-beta pathway. Has a essential roles in ovary determination. Regulates Wnt signaling by antagonizing DKK1/KREM1-mediated internalization of LRP6 through an interaction with KREM1. This Homo sapiens (Human) protein is R-spondin-1 (RSPO1).